Here is a 1762-residue protein sequence, read N- to C-terminus: Lysine-specific demethylase 3B (1762 aa).

Ala2 is subject to N-acetylalanine. 2 disordered regions span residues 253 to 350 (MDSS…FVPQ) and 426 to 468 (TTAS…NSSL). Residues 299 to 310 (ATKKLKGDRGEV) show a composition bias toward basic and acidic residues. A compositionally biased stretch (low complexity) spans 426–435 (TTASSTPTTV). A compositionally biased stretch (polar residues) spans 453 to 465 (GSWSQASGENSRN). 4 positions are modified to phosphoserine: Ser493, Ser547, Ser557, and Ser561. The disordered stretch occupies residues 574–613 (SVLGADTQPGPKAGSSVDRKVPAESMPTLTPAFPRSLLNT). Position 615 is a phosphothreonine (Thr615). Residues 713–746 (TGSPSLSAVGNGRSSSPTNSLTQPIEMPTLSSSP) are compositionally biased toward polar residues. A disordered region spans residues 713–763 (TGSPSLSAVGNGRSSSPTNSLTQPIEMPTLSSSPTEERPTVGPGQQDNPLL). Residues Ser767, Ser774, and Ser779 each carry the phosphoserine modification. A Glycyl lysine isopeptide (Lys-Gly) (interchain with G-Cter in SUMO2) cross-link involves residue Lys789. Ser799 bears the Phosphoserine mark. The interval 806 to 853 (ACRQDSDSSTNSDLSDLSDSEEQLQAKSGLKGIPEHLMGKLGPNGERS) is disordered. The segment at 1032-1057 (CDVCETTLFNIHWVCRKCGFGVCLDC) adopts a C6-type zinc-finger fold. Over residues 1146–1163 (QLPSVTPSASSGNETTFS) the composition is skewed to polar residues. A disordered region spans residues 1146–1217 (QLPSVTPSAS…AIRPPCPDTA (72 aa)). Phosphoserine occurs at positions 1254 and 1260. Residues 1285 to 1306 (SNSKTEGSSLRDLLHSGPGKLP) form a disordered region. The LXXLL motif signature appears at 1294–1298 (LRDLL). In terms of domain architecture, JmjC spans 1499–1722 (MPTRFEDLME…HCFRLTQEFR (224 aa)). Residues His1561, Asp1563, and His1690 each contribute to the Fe cation site.

This sequence belongs to the JHDM2 histone demethylase family. Requires Fe(2+) as cofactor.

It is found in the nucleus. It carries out the reaction N(6),N(6)-dimethyl-L-lysyl(9)-[histone H3] + 2 2-oxoglutarate + 2 O2 = L-lysyl(9)-[histone H3] + 2 formaldehyde + 2 succinate + 2 CO2. In terms of biological role, histone demethylase that specifically demethylates 'Lys-9' of histone H3, thereby playing a central role in histone code. Demethylation of Lys residue generates formaldehyde and succinate May have tumor suppressor activity. The sequence is that of Lysine-specific demethylase 3B (Kdm3b) from Mus musculus (Mouse).